Consider the following 398-residue polypeptide: Putative F-box protein At1g67450 (398 aa).

Positions 2–56 (TMMMSDLPNDLVEEILSRVPITSLGAVRSTCKRWNGLSKDRIVCKGDANQQFTGF) constitute an F-box domain.

This chain is Putative F-box protein At1g67450, found in Arabidopsis thaliana (Mouse-ear cress).